The following is a 206-amino-acid chain: LexA repressor (206 aa).

Residues 28 to 48 constitute a DNA-binding region (H-T-H motif); that stretch reads VREIGEAVGLASSSTVHGHLD. Active-site for autocatalytic cleavage activity residues include Ser-128 and Lys-166.

The protein belongs to the peptidase S24 family. Homodimer.

It catalyses the reaction Hydrolysis of Ala-|-Gly bond in repressor LexA.. Its function is as follows. Represses a number of genes involved in the response to DNA damage (SOS response), including recA and lexA. In the presence of single-stranded DNA, RecA interacts with LexA causing an autocatalytic cleavage which disrupts the DNA-binding part of LexA, leading to derepression of the SOS regulon and eventually DNA repair. This chain is LexA repressor, found in Exiguobacterium sp. (strain ATCC BAA-1283 / AT1b).